A 307-amino-acid polypeptide reads, in one-letter code: MSSIADRKTTGITFNIQKYSVHDGPGIRTVVFLKGCPLKCRWCSNPESQRKSVELAYNTGRCLTLAKCVRCVEICTAGAISRAEDDTISIDRALCNDCEQLCSGACPSNALITYGAHKTVDEVLRAVEQDSLFYARSGGGMTISGGEPFAQPAFTLALLREARRRRVHTAVETCGYASWDDMAAALPFLNYVLYDIKNLDDARHKEATGVSNQRIVENLRALRAEFPGIPVLVRTPVIPGFNDNEADIAAIAALTRELGVSYQLLPYHRLGTQKYHFLDREAPMGEVTLDAETMRRLEAVVAQTADS.

In terms of domain architecture, Radical SAM core spans 22–307 (HDGPGIRTVV…EAVVAQTADS (286 aa)). [4Fe-4S] cluster contacts are provided by cysteine 36, cysteine 40, cysteine 43, cysteine 62, cysteine 68, cysteine 71, cysteine 75, cysteine 95, cysteine 98, cysteine 102, and cysteine 106. 42–44 (WCS) is an S-adenosyl-L-methionine binding site. 4Fe-4S ferredoxin-type domains lie at 53–85 (VELA…RAED) and 86–117 (DTIS…YGAH). S-adenosyl-L-methionine contacts are provided by residues glycine 146, 195-197 (DIK), and histidine 268.

This sequence belongs to the organic radical-activating enzymes family. As to quaternary structure, monomer. [4Fe-4S] cluster serves as cofactor.

It catalyses the reaction glycyl-[protein] + reduced [flavodoxin] + S-adenosyl-L-methionine = glycin-2-yl radical-[protein] + semiquinone [flavodoxin] + 5'-deoxyadenosine + L-methionine + H(+). It participates in organosulfur degradation; alkanesulfonate degradation. Functionally, involved in an anaerobic respiration pathway that converts the sulfonate isethionate (2-hydroxyethanesulfonate) to ammonia, acetate and sulfide. Catalyzes activation of the isethionate sulfite-lyase IseG under anaerobic conditions by generation of an organic free radical on a glycine residue, via a homolytic cleavage of S-adenosyl-L-methionine (SAM). The polypeptide is Isethionate sulfite-lyase activating enzyme (Nitratidesulfovibrio vulgaris (strain ATCC 29579 / DSM 644 / CCUG 34227 / NCIMB 8303 / VKM B-1760 / Hildenborough) (Desulfovibrio vulgaris)).